Reading from the N-terminus, the 376-residue chain is Glutamate 5-kinase (376 aa).

Lys16 is a binding site for ATP. Residues Ser56, Asp143, and Asn155 each coordinate substrate. 175-176 contributes to the ATP binding site; it reads TD. Residues 283–361 form the PUA domain; sequence RGALSLDEGA…RDIETTLGYV (79 aa).

It belongs to the glutamate 5-kinase family.

Its subcellular location is the cytoplasm. It catalyses the reaction L-glutamate + ATP = L-glutamyl 5-phosphate + ADP. Its pathway is amino-acid biosynthesis; L-proline biosynthesis; L-glutamate 5-semialdehyde from L-glutamate: step 1/2. Its function is as follows. Catalyzes the transfer of a phosphate group to glutamate to form L-glutamate 5-phosphate. The protein is Glutamate 5-kinase of Halorhodospira halophila (strain DSM 244 / SL1) (Ectothiorhodospira halophila (strain DSM 244 / SL1)).